Here is a 25-residue protein sequence, read N- to C-terminus: Bioremediase (25 aa).

The 25-residue stretch at 1–25 (DFPIANGERQSPVDIDTKAVVQDPA) folds into the Alpha-carbonic anhydrase domain. A disordered region spans residues 1 to 25 (DFPIANGERQSPVDIDTKAVVQDPA).

It belongs to the alpha-carbonic anhydrase family. Zn(2+) serves as cofactor.

Releases silica from silica-rich substances. The sequence is that of Bioremediase from Thermoanaerobacter sp.